The primary structure comprises 1274 residues: MARQPEEEETAVARARRPPLWLLCLVACWLLGAGAEADFSILDEAQVLASQMRRLAAEELGVVTMQRIFNSFVYTEKISNGESEVQQLAKKIREKFNRYLDVVNRNKQVVEASYTAHLTSPLTAIQDCCTIPPSMMEFDGNFNTNVSRTISCDRLSTTVNSRAFNPGRDLNSVLADNLKSNPGIKWQYFSSEEGIFTVFPAHKFRCKGSYEHRSRPIYVSTVRPQSKHIVVILDHGASVTDTQLQIAKDAAQVILSAIDEHDKISVLTVADTVRTCSLDQCYKTFLSPATSETKRKMSTFVSSVKSSDSPTQHAVGFQKAFQLIRSTNNNTKFQANTDMVIIYLSAGITSKDSSEEDKKATLQVINEENSFLNNSVMILTYALMNDGVTGLKELAFLRDLAEQNSGKYGVPDRMALPVIKGSMMVLNQLSNLETTVGRFYTNLPNRMIDEAVFSLPFSDEMGDGLIMTVSKPCYFGNLLLGIVGVDVNLAYILEDVTYYQDSLASYTFLIDDKGYTLMHPSLTRPYLLSEPPLHTDIIHYENIPKFELVRQNILSLPLGSQIIAVPVNSSLSWHINKLRETGKEAYNVSYAWKMVQDTSFILCIVVIQPEIPVKQLKNLNTVPSSKLLYHRLDLLGQPSACLHFKQLATLESPTIMLSAGSFSSPYEHLSQPETKRMVEHYTAYLSDNTRLIANPGLKFSVRNEVMATSHVTDEWMTQMEMSSLNTYIVRRYIATPNGVLRIYPGSLMDKAFDPTRRQWYLHAVANPGLISLTGPYLDVGGAGYVVTISHTIHSSSTQLSSGHTVAVMGIDFTLRYFYKVLMDLLPVCNQDGGNKIRCFIMEDRGYLVAHPTLIDPKGHAPVEQQHITHKEPLVANDILNHPNFVKKNLCNSFSDRTVQRFYKFNTSLAGDLTNLVHGSHCSKYRLARIPGTNAFVGIVNETCDSLAFCACSMVDRLCLNCHRMEQNECECPCECPLEVNECTGNLTNAENRNPSCEVHQEPVTYTAIDPGLQDALHQCVNSRCSQRLESGDCFGVLDCEWCMVDSDGKTHLDKPYCAPQKECFGGIVGAKSPYVDDMGAIGDEVITLNMIKSAPVGPVAGGIMGCIMVLVLAVYAYRHQIHRRSHQHMSPLAAQEMSVRMSNLENDRDERDDDSHEDRGIISNTRFIAAVIERHAHSPERRRRYWGRSGTESDHGYSTMSPQEDSENPPCNNDPLSAGVDVGNHDEDLDLDTPPQTAALLSHKFHHYRSHHPTLHHSHHLQAAVTVHTVDAEC.

Residues 1–35 (MARQPEEEETAVARARRPPLWLLCLVACWLLGAGA) form the signal peptide. The Extracellular segment spans residues 36-1095 (EADFSILDEA…ITLNMIKSAP (1060 aa)). A glycan (N-linked (GlcNAc...) asparagine) is linked at Asn-145. The VWFA domain occupies 228 to 443 (HIVVILDHGA…TTVGRFYTNL (216 aa)). Cache domains follow at residues 453–532 (FSLP…SEPP) and 772–853 (LTGP…HPTL). Residues 1096-1116 (VGPVAGGIMGCIMVLVLAVYA) form a helical membrane-spanning segment. The Cytoplasmic portion of the chain corresponds to 1117–1274 (YRHQIHRRSH…VTVHTVDAEC (158 aa)). The tract at residues 1179–1227 (PERRRRYWGRSGTESDHGYSTMSPQEDSENPPCNNDPLSAGVDVGNHDE) is disordered. Residues 1196 to 1215 (GYSTMSPQEDSENPPCNNDP) are compositionally biased toward polar residues.

This sequence belongs to the calcium channel subunit alpha-2/delta family.

It is found in the membrane. Functionally, may regulate voltage-dependent calcium channels. The chain is VWFA and cache domain-containing protein 1 (CACHD1) from Homo sapiens (Human).